The chain runs to 509 residues: DNA primase DnaG (509 aa).

The Toprim domain occupies 167–253 (DAIVVVEGRA…CVEDLARHEV (87 aa)). Mg(2+) contacts are provided by E173, D215, and D217. Residues 267 to 411 (KQAASDDADP…ASTDEQPKTL (145 aa)) form a disordered region. 2 stretches are compositionally biased toward low complexity: residues 313–331 (PVSSPESPAESPAADETAA) and 383–402 (ESTAAEAPESSADGPAAAGA).

The protein belongs to the archaeal DnaG primase family. In terms of assembly, forms a ternary complex with MCM helicase and DNA. Requires Mg(2+) as cofactor.

The catalysed reaction is ssDNA + n NTP = ssDNA/pppN(pN)n-1 hybrid + (n-1) diphosphate.. Functionally, RNA polymerase that catalyzes the synthesis of short RNA molecules used as primers for DNA polymerase during DNA replication. In Natronomonas pharaonis (strain ATCC 35678 / DSM 2160 / CIP 103997 / JCM 8858 / NBRC 14720 / NCIMB 2260 / Gabara) (Halobacterium pharaonis), this protein is DNA primase DnaG.